The sequence spans 102 residues: Protamine-2 (102 aa).

Disordered regions lie at residues 1 to 40 and 67 to 102; these read MVRY…SPEH and HRQQ…CRRH. Phosphoserine occurs at positions 8, 10, and 37.

The protein belongs to the protamine P2 family. In terms of assembly, interacts with TDRP. Proteolytic processing into mature chains is required for histone eviction during spermatogenesis. Transition proteins (TNP1 and TNP2) are required for processing. As to expression, testis.

Its subcellular location is the nucleus. It is found in the chromosome. In terms of biological role, protamines substitute for histones in the chromatin of sperm during the haploid phase of spermatogenesis. They compact sperm DNA into a highly condensed, stable and inactive complex. The chain is Protamine-2 (PRM2) from Pan troglodytes (Chimpanzee).